Consider the following 503-residue polypeptide: Probable mitochondrial-processing peptidase subunit alpha-1, mitochondrial (503 aa).

Residues M1–P59 constitute a mitochondrion transit peptide.

This sequence belongs to the peptidase M16 family. Heterodimer of alpha and beta subunits, forming the mitochondrial processing protease (MPP) in which subunit alpha is involved in substrate recognition and binding and subunit beta is the catalytic subunit. Component of the ubiquinol-cytochrome c oxidoreductase (cytochrome b-c1 complex, complex III, CIII), a multisubunit enzyme composed of 10 subunits. The complex is composed of 3 respiratory subunits cytochrome b (MT-CYB), cytochrome c1 (CYC1-1 or CYC1-2) and Rieske protein (UCR1-1 or UCR1-2), 2 core protein subunits MPPalpha1 (or MPPalpha2) and MPPB, and 5 low-molecular weight protein subunits QCR7-1 (or QCR7-2), UCRQ-1 (or UCRQ-2), QCR9, UCRY and probably QCR6-1 (or QCR6-2). The complex exists as an obligatory dimer and forms supercomplexes (SCs) in the inner mitochondrial membrane with NADH-ubiquinone oxidoreductase (complex I, CI), resulting in different assemblies (supercomplexes SCI(1)III(2) and SCI(2)III(4)).

It localises to the mitochondrion matrix. It is found in the mitochondrion inner membrane. Its function is as follows. Substrate recognition and binding subunit of the essential mitochondrial processing protease (MPP), which cleaves the mitochondrial sequence off newly imported precursors proteins. Component of the ubiquinol-cytochrome c oxidoreductase, a multisubunit transmembrane complex that is part of the mitochondrial electron transport chain which drives oxidative phosphorylation. The respiratory chain contains 3 multisubunit complexes succinate dehydrogenase (complex II, CII), ubiquinol-cytochrome c oxidoreductase (cytochrome b-c1 complex, complex III, CIII) and cytochrome c oxidase (complex IV, CIV), that cooperate to transfer electrons derived from NADH and succinate to molecular oxygen, creating an electrochemical gradient over the inner membrane that drives transmembrane transport and the ATP synthase. The cytochrome b-c1 complex catalyzes electron transfer from ubiquinol to cytochrome c, linking this redox reaction to translocation of protons across the mitochondrial inner membrane, with protons being carried across the membrane as hydrogens on the quinol. In the process called Q cycle, 2 protons are consumed from the matrix, 4 protons are released into the intermembrane space and 2 electrons are passed to cytochrome c. The chain is Probable mitochondrial-processing peptidase subunit alpha-1, mitochondrial (MPPalpha1) from Arabidopsis thaliana (Mouse-ear cress).